The primary structure comprises 242 residues: DNA repair protein RecO (242 aa).

This sequence belongs to the RecO family. Monomer.

Functionally, involved in DNA repair and RecF pathway recombination. The sequence is that of DNA repair protein RecO from Shigella sonnei (strain Ss046).